The chain runs to 499 residues: Rhamnogalacturonate lyase A (499 aa).

The first 20 residues, 1-20, serve as a signal peptide directing secretion; that stretch reads MLSKTSLLSLLSLAAGVVNA. 2 disulfides stabilise this stretch: cysteine 49–cysteine 92 and cysteine 183–cysteine 192.

Belongs to the polysaccharide lyase 4 family.

Its subcellular location is the secreted. The catalysed reaction is Endotype eliminative cleavage of L-alpha-rhamnopyranosyl-(1-&gt;4)-alpha-D-galactopyranosyluronic acid bonds of rhamnogalacturonan I domains in ramified hairy regions of pectin leaving L-rhamnopyranose at the reducing end and 4-deoxy-4,5-unsaturated D-galactopyranosyluronic acid at the non-reducing end.. In terms of biological role, pectinolytic enzymes consist of four classes of enzymes: pectin lyase, polygalacturonase, pectin methylesterase and rhamnogalacturonase. Degrades the rhamnogalacturonan I (RG-I) backbone of pectin. The chain is Rhamnogalacturonate lyase A (rglA) from Aspergillus niger.